The sequence spans 485 residues: Glutamyl-tRNA(Gln) amidotransferase subunit A (485 aa).

Catalysis depends on charge relay system residues lysine 79 and serine 154. Catalysis depends on serine 178, which acts as the Acyl-ester intermediate.

The protein belongs to the amidase family. GatA subfamily. As to quaternary structure, heterotrimer of A, B and C subunits.

It catalyses the reaction L-glutamyl-tRNA(Gln) + L-glutamine + ATP + H2O = L-glutaminyl-tRNA(Gln) + L-glutamate + ADP + phosphate + H(+). Functionally, allows the formation of correctly charged Gln-tRNA(Gln) through the transamidation of misacylated Glu-tRNA(Gln) in organisms which lack glutaminyl-tRNA synthetase. The reaction takes place in the presence of glutamine and ATP through an activated gamma-phospho-Glu-tRNA(Gln). The sequence is that of Glutamyl-tRNA(Gln) amidotransferase subunit A from Clostridium botulinum (strain Alaska E43 / Type E3).